The chain runs to 66 residues: uncharacterized protein (66 aa).

The protein belongs to the YeeT/YkfH/YpjJ family.

This is an uncharacterized protein from Escherichia coli (strain K12).